The chain runs to 677 residues: Transketolase 1 (677 aa).

His27 contributes to the substrate binding site. Residues His66 and 114–116 (GPL) each bind thiamine diphosphate. Mg(2+) is bound at residue Asp155. Residues Gly156 and Asn185 each coordinate thiamine diphosphate. Mg(2+) is bound by residues Asn185 and Ile187. Substrate contacts are provided by His261, Arg356, and Ser383. His261 lines the thiamine diphosphate pocket. Positions 415 and 442 each coordinate thiamine diphosphate. Catalysis depends on Glu415, which acts as the Proton donor. His466, Asp474, and Arg525 together coordinate substrate.

Belongs to the transketolase family. Homodimer. The cofactor is Mg(2+). It depends on Ca(2+) as a cofactor. Mn(2+) serves as cofactor. Co(2+) is required as a cofactor. Requires thiamine diphosphate as cofactor.

The enzyme catalyses D-sedoheptulose 7-phosphate + D-glyceraldehyde 3-phosphate = aldehydo-D-ribose 5-phosphate + D-xylulose 5-phosphate. Catalyzes the transfer of a two-carbon ketol group from a ketose donor to an aldose acceptor, via a covalent intermediate with the cofactor thiamine pyrophosphate. The sequence is that of Transketolase 1 (TKT1) from Candida albicans (Yeast).